Reading from the N-terminus, the 191-residue chain is UPF0312 protein Pmen_0419 (191 aa).

An N-terminal signal peptide occupies residues 1-22 (MLKNALAALVLGSALIGGQAMA).

Belongs to the UPF0312 family. Type 1 subfamily.

It is found in the periplasm. In Ectopseudomonas mendocina (strain ymp) (Pseudomonas mendocina), this protein is UPF0312 protein Pmen_0419.